The chain runs to 478 residues: Hemolysin secretion protein D, chromosomal (478 aa).

Topologically, residues 1-59 (MKTWLMGFSEFLLRYKLVWSETWKIRKQLDTPVREKDENEFLPAHLELIETPVSRRPRL) are cytoplasmic. A helical; Signal-anchor for type II membrane protein transmembrane segment spans residues 60 to 80 (VAYFIMGFLVIAFILSVLGQV). Residues 81 to 478 (EIVATANGKL…ESVTESLHER (398 aa)) are Periplasmic-facing.

The protein belongs to the membrane fusion protein (MFP) (TC 8.A.1) family.

Its subcellular location is the cell inner membrane. Functionally, involved in the transport of hemolysin A. This chain is Hemolysin secretion protein D, chromosomal (hlyD), found in Escherichia coli.